A 200-amino-acid chain; its full sequence is Methylthioribulose-1-phosphate dehydratase-like protein (200 aa).

It belongs to the aldolase class II family. MtnB subfamily.

This Schizosaccharomyces pombe (strain 972 / ATCC 24843) (Fission yeast) protein is Methylthioribulose-1-phosphate dehydratase-like protein.